Consider the following 240-residue polypeptide: Uridylate kinase (240 aa).

13 to 16 lines the ATP pocket; that stretch reads KFSG. G55 is a UMP binding site. ATP is bound by residues G56 and R60. Residues D76 and 137-144 each bind UMP; that span reads TGNPFFTT. ATP contacts are provided by T164, Y170, and D173.

Belongs to the UMP kinase family. In terms of assembly, homohexamer.

It localises to the cytoplasm. The catalysed reaction is UMP + ATP = UDP + ADP. The protein operates within pyrimidine metabolism; CTP biosynthesis via de novo pathway; UDP from UMP (UMPK route): step 1/1. Inhibited by UTP. In terms of biological role, catalyzes the reversible phosphorylation of UMP to UDP. The protein is Uridylate kinase of Helicobacter pylori (strain ATCC 700392 / 26695) (Campylobacter pylori).